We begin with the raw amino-acid sequence, 174 residues long: ATP-dependent protease subunit HslV (174 aa).

T2 is a catalytic residue. Positions 159, 162, and 165 each coordinate Na(+).

It belongs to the peptidase T1B family. HslV subfamily. A double ring-shaped homohexamer of HslV is capped on each side by a ring-shaped HslU homohexamer. The assembly of the HslU/HslV complex is dependent on binding of ATP.

The protein resides in the cytoplasm. The catalysed reaction is ATP-dependent cleavage of peptide bonds with broad specificity.. With respect to regulation, allosterically activated by HslU binding. Its function is as follows. Protease subunit of a proteasome-like degradation complex believed to be a general protein degrading machinery. In Lacticaseibacillus casei (strain BL23) (Lactobacillus casei), this protein is ATP-dependent protease subunit HslV.